A 31-amino-acid polypeptide reads, in one-letter code: Kalata-B9 (31 aa).

The cyclopeptide (Gly-Asp) cross-link spans 1-31 (GSVFNCGETCVLGTCYTPGCTCNTYRVCTKD). Disulfide bonds link Cys-6–Cys-20, Cys-10–Cys-22, and Cys-15–Cys-28.

It belongs to the cyclotide family. Bracelet subfamily. This peptide occurs in both cyclic and linear forms.

In terms of biological role, probably participates in a plant defense mechanism. The sequence is that of Kalata-B9 from Oldenlandia affinis.